Reading from the N-terminus, the 445-residue chain is Tubulin beta-4B chain (445 aa).

The short motif at 1–4 (MREI) is the MREI motif element. Gln-11 is a binding site for GTP. Thr-55 carries the post-translational modification Phosphothreonine. An N6-acetyllysine modification is found at Lys-58. Residues Glu-69, Ser-138, Gly-142, Thr-143, and Gly-144 each contribute to the GTP site. Glu-69 is a Mg(2+) binding site. At Ser-172 the chain carries Phosphoserine; by CDK1. Residues Asn-204 and Asn-226 each coordinate GTP. The tract at residues 426-445 (QDATAEEEGEFEEEAEEEVA) is disordered. The span at 429 to 445 (TAEEEGEFEEEAEEEVA) shows a compositional bias: acidic residues. A 5-glutamyl polyglutamate modification is found at Glu-438.

It belongs to the tubulin family. As to quaternary structure, dimer of alpha and beta chains. A typical microtubule is a hollow water-filled tube with an outer diameter of 25 nm and an inner diameter of 15 nM. Alpha-beta heterodimers associate head-to-tail to form protofilaments running lengthwise along the microtubule wall with the beta-tubulin subunit facing the microtubule plus end conferring a structural polarity. Microtubules usually have 13 protofilaments but different protofilament numbers can be found in some organisms and specialized cells. Component of sperm flagellar doublet microtubules. The cofactor is Mg(2+). Some glutamate residues at the C-terminus are polyglycylated, resulting in polyglycine chains on the gamma-carboxyl group. Glycylation is mainly limited to tubulin incorporated into axonemes (cilia and flagella) whereas glutamylation is prevalent in neuronal cells, centrioles, axonemes, and the mitotic spindle. Both modifications can coexist on the same protein on adjacent residues, and lowering polyglycylation levels increases polyglutamylation, and reciprocally. Cilia and flagella glycylation is required for their stability and maintenance. Flagella glycylation controls sperm motility. In terms of processing, some glutamate residues at the C-terminus are polyglutamylated, resulting in polyglutamate chains on the gamma-carboxyl group. Polyglutamylation plays a key role in microtubule severing by spastin (SPAST). SPAST preferentially recognizes and acts on microtubules decorated with short polyglutamate tails: severing activity by SPAST increases as the number of glutamates per tubulin rises from one to eight, but decreases beyond this glutamylation threshold. Glutamylation is also involved in cilia motility. Post-translationally, phosphorylated on Ser-172 by CDK1 during the cell cycle, from metaphase to telophase, but not in interphase. This phosphorylation inhibits tubulin incorporation into microtubules.

It localises to the cytoplasm. It is found in the cytoskeleton. The protein localises to the flagellum axoneme. Tubulin is the major constituent of microtubules, a cylinder consisting of laterally associated linear protofilaments composed of alpha- and beta-tubulin heterodimers. Microtubules grow by the addition of GTP-tubulin dimers to the microtubule end, where a stabilizing cap forms. Below the cap, tubulin dimers are in GDP-bound state, owing to GTPase activity of alpha-tubulin. This chain is Tubulin beta-4B chain (TUBB4B), found in Bos taurus (Bovine).